Here is a 135-residue protein sequence, read N- to C-terminus: Putative nickel-responsive regulator (135 aa).

4 residues coordinate Ni(2+): H79, H90, H92, and C98.

It belongs to the transcriptional regulatory CopG/NikR family. The cofactor is Ni(2+).

In terms of biological role, transcriptional regulator. The polypeptide is Putative nickel-responsive regulator (Dictyoglomus turgidum (strain DSM 6724 / Z-1310)).